Reading from the N-terminus, the 444-residue chain is tRNA-2-methylthio-N(6)-dimethylallyladenosine synthase (444 aa).

The MTTase N-terminal domain maps to 3-117 (RGLYIESYGC…LPELIMKVKR (115 aa)). Positions 12, 48, 80, 155, 159, and 162 each coordinate [4Fe-4S] cluster. One can recognise a Radical SAM core domain in the interval 141 to 374 (ANGGVSAYVS…LLTKQQLQFN (234 aa)). The region spanning 375–441 (KSMEGRVMDV…QNSLEGTVLS (67 aa)) is the TRAM domain.

It belongs to the methylthiotransferase family. MiaB subfamily. As to quaternary structure, monomer. Requires [4Fe-4S] cluster as cofactor.

It localises to the cytoplasm. It carries out the reaction N(6)-dimethylallyladenosine(37) in tRNA + (sulfur carrier)-SH + AH2 + 2 S-adenosyl-L-methionine = 2-methylsulfanyl-N(6)-dimethylallyladenosine(37) in tRNA + (sulfur carrier)-H + 5'-deoxyadenosine + L-methionine + A + S-adenosyl-L-homocysteine + 2 H(+). Catalyzes the methylthiolation of N6-(dimethylallyl)adenosine (i(6)A), leading to the formation of 2-methylthio-N6-(dimethylallyl)adenosine (ms(2)i(6)A) at position 37 in tRNAs that read codons beginning with uridine. The sequence is that of tRNA-2-methylthio-N(6)-dimethylallyladenosine synthase from Anaplasma phagocytophilum (strain HZ).